The following is a 329-amino-acid chain: UPF0421 protein SH1063 (329 aa).

Transmembrane regions (helical) follow at residues 25 to 45 (LFCLMLDLTPIFAILTAIVTI), 60 to 80 (LPATVIGALFAVLFTFIFGDP), 87 to 107 (FSALFTILVCTKLNLQVGTTV), 108 to 128 (AVLTSVAMIPGIHDAYLFNFF), and 131 to 151 (LLTALIGLVTAGLVNFIVLPP).

Belongs to the UPF0421 family.

It localises to the cell membrane. The protein is UPF0421 protein SH1063 of Staphylococcus haemolyticus (strain JCSC1435).